A 307-amino-acid polypeptide reads, in one-letter code: 17-beta-hydroxysteroid dehydrogenase type 3 (307 aa).

Residues 6 to 26 (IIFVLTGTCAILVFGGKIASL) traverse the membrane as a helical segment. Residue 47–76 (GKWAVITGGSDGIGRAYAEELSKQGMSVII) coordinates NADP(+). Substrate is bound at residue Ser-187. Tyr-200 acts as the Proton acceptor in catalysis.

This sequence belongs to the short-chain dehydrogenases/reductases (SDR) family. Expression shows strong sexual dimorphism. In female, highly expressed in ovaries, and at lower levels in skin muscle, eyes and liver. In males, strongly expressed in liver and at lower levels in testis, spleen, kidney, intestine and muscle.

The protein localises to the endoplasmic reticulum. It localises to the membrane. It catalyses the reaction a 17beta-hydroxy steroid + NADP(+) = a 17-oxo steroid + NADPH + H(+). It carries out the reaction testosterone + NADP(+) = androst-4-ene-3,17-dione + NADPH + H(+). The enzyme catalyses 3beta-hydroxyandrost-5-en-17-one + NADPH + H(+) = androst-5-en-3beta,17beta-diol + NADP(+). The catalysed reaction is 3beta-hydroxy-5alpha-androstan-17-one + NADPH + H(+) = 5alpha-androstane-3beta,17beta-diol + NADP(+). It catalyses the reaction androst-4-ene-3,11,17-trione + NADPH + H(+) = 17beta-hydroxyandrost-4-ene-3,11-dione + NADP(+). It carries out the reaction 11beta-hydroxyandrost-4-ene-3,17-dione + NADPH + H(+) = 11beta,17beta-dihydroxyandrost-4-ene-3-one + NADP(+). Its pathway is hormone biosynthesis; testosterone biosynthesis. It functions in the pathway steroid metabolism. Catalyzes the conversion of 17-oxosteroids to 17beta-hydroxysteroids in the presence of NADPH. Favors the reduction of androstenedione to testosterone. Testosterone is the key androgen driving male development and function. Among further tested androgens epiandrosterone and dehydroepiandrosterone are accepted as substrates and reduced at C-17. Can also reduce 11-ketoandrostenedione as well as 11beta-hydroxyandrostenedione at C-17 to the respective testosterone forms. Cannot use androsterone and androstanedione as substrates. This Danio rerio (Zebrafish) protein is 17-beta-hydroxysteroid dehydrogenase type 3 (hsd17b3).